The sequence spans 265 residues: Apolipoprotein A-I (265 aa).

Residues 1–18 form the signal peptide; that stretch reads MKAVVLTLAVLFLTGSQA. Repeat copies occupy residues 67-88 and 89-110. Residues 67-265 are 10 X approximate tandem repeats; the sequence is LKLVDNWDTL…IDEAAKKLTA (199 aa). The stretch at 111–121 is one 3; half-length repeat; that stretch reads KDLEDVRQKTQ. A run of 5 repeats spans residues 122 to 143, 144 to 165, 166 to 187, 188 to 209, and 210 to 231. Methionine 193 carries the post-translational modification Methionine sulfoxide. A 9; half-length repeat occupies 232–242; sequence PVLEDIHQGLM. Methionine 242 and methionine 244 each carry methionine sulfoxide. Repeat 10 spans residues 243 to 265; it reads PMWESFKTGVLNVIDEAAKKLTA.

This sequence belongs to the apolipoprotein A1/A4/E family. Homodimer. Interacts with APOA1BP and CLU. Component of a sperm activating protein complex (SPAP), consisting of APOA1, an immunoglobulin heavy chain, an immunoglobulin light chain and albumin. Interacts with NDRG1. Interacts with SCGB3A2. Interacts with NAXE and YJEFN3. In terms of processing, glycosylated. Post-translationally, palmitoylated. Phosphorylation sites are present in the extracellular medium. As to expression, major protein of plasma HDL, also found in chylomicrons.

It localises to the secreted. In terms of biological role, participates in the reverse transport of cholesterol from tissues to the liver for excretion by promoting cholesterol efflux from tissues and by acting as a cofactor for the lecithin cholesterol acyltransferase (LCAT). As part of the SPAP complex, activates spermatozoa motility. The protein is Apolipoprotein A-I (APOA1) of Tupaia belangeri (Common tree shrew).